Here is a 191-residue protein sequence, read N- to C-terminus: Small ribosomal subunit protein uS7 (191 aa).

The disordered stretch occupies residues 56-80; sequence NKSGEQGDGDGEGGGKAGGIKKRSL.

It belongs to the universal ribosomal protein uS7 family. Part of the 30S ribosomal subunit. Contacts proteins S9 and S11.

In terms of biological role, one of the primary rRNA binding proteins, it binds directly to 16S rRNA where it nucleates assembly of the head domain of the 30S subunit. Is located at the subunit interface close to the decoding center, probably blocks exit of the E-site tRNA. In Coxiella burnetii (strain CbuG_Q212) (Coxiella burnetii (strain Q212)), this protein is Small ribosomal subunit protein uS7.